The chain runs to 552 residues: Hydroxylamine reductase (552 aa).

4 residues coordinate [2Fe-2S] cluster: Cys-5, Cys-8, Cys-20, and Cys-27. Residues His-251, Glu-275, Cys-319, Cys-407, Cys-435, Cys-460, Glu-494, and Lys-496 each contribute to the hybrid [4Fe-2O-2S] cluster site. Cys-407 carries the cysteine persulfide modification.

Belongs to the HCP family. [2Fe-2S] cluster is required as a cofactor. Hybrid [4Fe-2O-2S] cluster serves as cofactor.

The protein localises to the cytoplasm. The catalysed reaction is A + NH4(+) + H2O = hydroxylamine + AH2 + H(+). In terms of biological role, catalyzes the reduction of hydroxylamine to form NH(3) and H(2)O. This is Hydroxylamine reductase from Shigella boydii serotype 4 (strain Sb227).